A 234-amino-acid polypeptide reads, in one-letter code: 2-C-methyl-D-erythritol 4-phosphate cytidylyltransferase (234 aa).

Belongs to the IspD/TarI cytidylyltransferase family. IspD subfamily.

The catalysed reaction is 2-C-methyl-D-erythritol 4-phosphate + CTP + H(+) = 4-CDP-2-C-methyl-D-erythritol + diphosphate. It participates in isoprenoid biosynthesis; isopentenyl diphosphate biosynthesis via DXP pathway; isopentenyl diphosphate from 1-deoxy-D-xylulose 5-phosphate: step 2/6. Functionally, catalyzes the formation of 4-diphosphocytidyl-2-C-methyl-D-erythritol from CTP and 2-C-methyl-D-erythritol 4-phosphate (MEP). The protein is 2-C-methyl-D-erythritol 4-phosphate cytidylyltransferase of Shewanella sediminis (strain HAW-EB3).